Reading from the N-terminus, the 334-residue chain is Ferredoxin--NADP reductase (334 aa).

FAD contacts are provided by Asp33, Gln41, Tyr46, Ala86, Phe120, Asp286, and Thr327.

This sequence belongs to the ferredoxin--NADP reductase type 2 family. Homodimer. The cofactor is FAD.

The enzyme catalyses 2 reduced [2Fe-2S]-[ferredoxin] + NADP(+) + H(+) = 2 oxidized [2Fe-2S]-[ferredoxin] + NADPH. The protein is Ferredoxin--NADP reductase of Rickettsia akari (strain Hartford).